The following is a 294-amino-acid chain: Phosphatidylglycerol--prolipoprotein diacylglyceryl transferase (294 aa).

7 helical membrane passes run 21–41 (VSLH…LWLA), 60–80 (LLYV…VLFY), 96–116 (WDGG…MIWF), 124–144 (FFQV…LGRI), 199–219 (SQLY…NIFV), 226–246 (GSVS…VEFF), and 259–279 (ISMG…FMVW). Arginine 143 serves as a coordination point for a 1,2-diacyl-sn-glycero-3-phospho-(1'-sn-glycerol).

It belongs to the Lgt family.

It is found in the cell inner membrane. It carries out the reaction L-cysteinyl-[prolipoprotein] + a 1,2-diacyl-sn-glycero-3-phospho-(1'-sn-glycerol) = an S-1,2-diacyl-sn-glyceryl-L-cysteinyl-[prolipoprotein] + sn-glycerol 1-phosphate + H(+). It participates in protein modification; lipoprotein biosynthesis (diacylglyceryl transfer). In terms of biological role, catalyzes the transfer of the diacylglyceryl group from phosphatidylglycerol to the sulfhydryl group of the N-terminal cysteine of a prolipoprotein, the first step in the formation of mature lipoproteins. In Proteus mirabilis (strain HI4320), this protein is Phosphatidylglycerol--prolipoprotein diacylglyceryl transferase.